The sequence spans 169 residues: Crossover junction endodeoxyribonuclease RuvC (169 aa).

Active-site residues include aspartate 11, glutamate 71, and aspartate 143. 3 residues coordinate Mg(2+): aspartate 11, glutamate 71, and aspartate 143.

This sequence belongs to the RuvC family. Homodimer which binds Holliday junction (HJ) DNA. The HJ becomes 2-fold symmetrical on binding to RuvC with unstacked arms; it has a different conformation from HJ DNA in complex with RuvA. In the full resolvosome a probable DNA-RuvA(4)-RuvB(12)-RuvC(2) complex forms which resolves the HJ. Requires Mg(2+) as cofactor.

Its subcellular location is the cytoplasm. The enzyme catalyses Endonucleolytic cleavage at a junction such as a reciprocal single-stranded crossover between two homologous DNA duplexes (Holliday junction).. Functionally, the RuvA-RuvB-RuvC complex processes Holliday junction (HJ) DNA during genetic recombination and DNA repair. Endonuclease that resolves HJ intermediates. Cleaves cruciform DNA by making single-stranded nicks across the HJ at symmetrical positions within the homologous arms, yielding a 5'-phosphate and a 3'-hydroxyl group; requires a central core of homology in the junction. The consensus cleavage sequence is 5'-(A/T)TT(C/G)-3'. Cleavage occurs on the 3'-side of the TT dinucleotide at the point of strand exchange. HJ branch migration catalyzed by RuvA-RuvB allows RuvC to scan DNA until it finds its consensus sequence, where it cleaves and resolves the cruciform DNA. In Rhizobium leguminosarum bv. trifolii (strain WSM2304), this protein is Crossover junction endodeoxyribonuclease RuvC.